A 343-amino-acid polypeptide reads, in one-letter code: 3-isopropylmalate dehydrogenase (343 aa).

The substrate site is built by Arg-94, Arg-104, Arg-128, and Asp-218. Residues Asp-218, Asp-242, and Asp-246 each contribute to the Mg(2+) site. Position 278 to 290 (278 to 290 (GSAPDIAGQNKAN)) interacts with NAD(+).

Belongs to the isocitrate and isopropylmalate dehydrogenases family. LeuB type 2 subfamily. Homodimer. The cofactor is Mg(2+). Requires Mn(2+) as cofactor.

The protein resides in the cytoplasm. It catalyses the reaction (2R,3S)-3-isopropylmalate + NAD(+) = 4-methyl-2-oxopentanoate + CO2 + NADH. The protein operates within amino-acid biosynthesis; L-leucine biosynthesis; L-leucine from 3-methyl-2-oxobutanoate: step 3/4. Functionally, catalyzes the oxidation of 3-carboxy-2-hydroxy-4-methylpentanoate (3-isopropylmalate) to 3-carboxy-4-methyl-2-oxopentanoate. The product decarboxylates to 4-methyl-2 oxopentanoate. The polypeptide is 3-isopropylmalate dehydrogenase (Bifidobacterium longum (strain DJO10A)).